A 205-amino-acid chain; its full sequence is Cbp/p300-interacting transactivator 3 (205 aa).

It belongs to the CITED family.

The protein localises to the nucleus. Its function is as follows. Acts as a transcriptional coactivator. Enhances estrogen-dependent transactivation mediated by estrogen receptors. The polypeptide is Cbp/p300-interacting transactivator 3 (CITED3) (Gallus gallus (Chicken)).